Reading from the N-terminus, the 343-residue chain is Holliday junction branch migration complex subunit RuvB (343 aa).

The tract at residues 1-182 (MTDPIPLHTP…FGIPVRLNFY (182 aa)) is large ATPase domain (RuvB-L). ATP-binding residues include Leu21, Arg22, Gly63, Lys66, Thr67, Thr68, Arg172, Tyr182, and Arg219. Thr67 is a binding site for Mg(2+). The interval 183–253 (TEEELEKVVT…IADAALTRLE (71 aa)) is small ATPAse domain (RuvB-S). Positions 256–343 (GLGLDAMDRR…SQTGLFDGKS (88 aa)) are head domain (RuvB-H). The DNA site is built by Arg292, Arg311, and Arg316.

Belongs to the RuvB family. Homohexamer. Forms an RuvA(8)-RuvB(12)-Holliday junction (HJ) complex. HJ DNA is sandwiched between 2 RuvA tetramers; dsDNA enters through RuvA and exits via RuvB. An RuvB hexamer assembles on each DNA strand where it exits the tetramer. Each RuvB hexamer is contacted by two RuvA subunits (via domain III) on 2 adjacent RuvB subunits; this complex drives branch migration. In the full resolvosome a probable DNA-RuvA(4)-RuvB(12)-RuvC(2) complex forms which resolves the HJ.

The protein localises to the cytoplasm. It carries out the reaction ATP + H2O = ADP + phosphate + H(+). Functionally, the RuvA-RuvB-RuvC complex processes Holliday junction (HJ) DNA during genetic recombination and DNA repair, while the RuvA-RuvB complex plays an important role in the rescue of blocked DNA replication forks via replication fork reversal (RFR). RuvA specifically binds to HJ cruciform DNA, conferring on it an open structure. The RuvB hexamer acts as an ATP-dependent pump, pulling dsDNA into and through the RuvAB complex. RuvB forms 2 homohexamers on either side of HJ DNA bound by 1 or 2 RuvA tetramers; 4 subunits per hexamer contact DNA at a time. Coordinated motions by a converter formed by DNA-disengaged RuvB subunits stimulates ATP hydrolysis and nucleotide exchange. Immobilization of the converter enables RuvB to convert the ATP-contained energy into a lever motion, pulling 2 nucleotides of DNA out of the RuvA tetramer per ATP hydrolyzed, thus driving DNA branch migration. The RuvB motors rotate together with the DNA substrate, which together with the progressing nucleotide cycle form the mechanistic basis for DNA recombination by continuous HJ branch migration. Branch migration allows RuvC to scan DNA until it finds its consensus sequence, where it cleaves and resolves cruciform DNA. This Erythrobacter litoralis (strain HTCC2594) protein is Holliday junction branch migration complex subunit RuvB.